The sequence spans 266 residues: MSSVFGKPRAGSGPQSAPLEVNLAILGRRGAGKSALTVKFLTKRFISEYDPNLEDTYSSEETVDHQPVHLRVMDTADLDTPRNCERYLNWAHAFLVVYSVDSRQSFDSSSSYLELLALHAKETQRSIPALLLGNKLDMAQYRQVTKAEGVALAGRFGCLFFEVSACLDFEHVQHVFHEAVREARRELEKSPLTRPLFISEERALPHQAPLTARHGLASCTFNTLSTINLKEMPTVAQAKLVTVKSSRAQSKRKAPTLTLLKGFKIF.

GTP is bound by residues 27-34 (GRRGAGKS), 74-78 (DTADL), and 134-137 (NKLD).

Belongs to the small GTPase superfamily. Ras family.

It catalyses the reaction GTP + H2O = GDP + phosphate + H(+). In Homo sapiens (Human), this protein is Ras-like protein family member 12 (RASL12).